Here is a 952-residue protein sequence, read N- to C-terminus: Aminopeptidase 2, mitochondrial (952 aa).

The N-terminal 52 residues, 1–52 (MPIVRWLLLKSAVRGSSLIGKAHPCLRSIAAHPRYLSNVYSPPAGVSRSLRI), are a transit peptide targeting the mitochondrion. Substrate is bound by residues E228 and 360–364 (GAMEN). An N-linked (GlcNAc...) asparagine glycan is attached at N381. Residue H396 participates in Zn(2+) binding. Residue E397 is the Proton acceptor of the active site. Residues H400 and E419 each coordinate Zn(2+). A glycan (N-linked (GlcNAc...) asparagine) is linked at N713.

The protein belongs to the peptidase M1 family. It depends on Zn(2+) as a cofactor.

The protein resides in the periplasm. The protein localises to the cytoplasm. It localises to the mitochondrion. Functionally, involved in the cellular supply of leucine from externally offered leucine-containing dipeptide substrates. This Saccharomyces cerevisiae (strain ATCC 204508 / S288c) (Baker's yeast) protein is Aminopeptidase 2, mitochondrial (APE2).